Consider the following 425-residue polypeptide: Serine--tRNA ligase (425 aa).

233 to 235 (TAE) is a binding site for L-serine. Residue 264-266 (RRE) coordinates ATP. E287 contributes to the L-serine binding site. 351–354 (EISS) contributes to the ATP binding site. Residue S385 coordinates L-serine.

It belongs to the class-II aminoacyl-tRNA synthetase family. Type-1 seryl-tRNA synthetase subfamily. As to quaternary structure, homodimer. The tRNA molecule binds across the dimer.

The protein resides in the cytoplasm. It carries out the reaction tRNA(Ser) + L-serine + ATP = L-seryl-tRNA(Ser) + AMP + diphosphate + H(+). The enzyme catalyses tRNA(Sec) + L-serine + ATP = L-seryl-tRNA(Sec) + AMP + diphosphate + H(+). It participates in aminoacyl-tRNA biosynthesis; selenocysteinyl-tRNA(Sec) biosynthesis; L-seryl-tRNA(Sec) from L-serine and tRNA(Sec): step 1/1. Catalyzes the attachment of serine to tRNA(Ser). Is also able to aminoacylate tRNA(Sec) with serine, to form the misacylated tRNA L-seryl-tRNA(Sec), which will be further converted into selenocysteinyl-tRNA(Sec). This Prochlorococcus marinus (strain SARG / CCMP1375 / SS120) protein is Serine--tRNA ligase.